We begin with the raw amino-acid sequence, 363 residues long: 3-dehydroquinate synthase (363 aa).

NAD(+)-binding positions include 134–135, Lys-147, and Lys-156; that span reads TT. Zn(2+) contacts are provided by Glu-189, His-254, and His-271.

Belongs to the sugar phosphate cyclases superfamily. Dehydroquinate synthase family. Co(2+) serves as cofactor. The cofactor is Zn(2+). Requires NAD(+) as cofactor.

Its subcellular location is the cytoplasm. The enzyme catalyses 7-phospho-2-dehydro-3-deoxy-D-arabino-heptonate = 3-dehydroquinate + phosphate. It participates in metabolic intermediate biosynthesis; chorismate biosynthesis; chorismate from D-erythrose 4-phosphate and phosphoenolpyruvate: step 2/7. In terms of biological role, catalyzes the conversion of 3-deoxy-D-arabino-heptulosonate 7-phosphate (DAHP) to dehydroquinate (DHQ). This Prochlorococcus marinus (strain AS9601) protein is 3-dehydroquinate synthase.